The primary structure comprises 279 residues: Pantothenate synthetase (279 aa).

Residue 26–33 (MGNLHEGH) participates in ATP binding. Catalysis depends on His-33, which acts as the Proton donor. Gln-57 is a (R)-pantoate binding site. Gln-57 serves as a coordination point for beta-alanine. 144-147 (GKKD) is an ATP binding site. (R)-pantoate is bound at residue Gln-150. ATP-binding positions include Val-173 and 181-184 (LSSR).

It belongs to the pantothenate synthetase family. In terms of assembly, homodimer.

The protein resides in the cytoplasm. It carries out the reaction (R)-pantoate + beta-alanine + ATP = (R)-pantothenate + AMP + diphosphate + H(+). It participates in cofactor biosynthesis; (R)-pantothenate biosynthesis; (R)-pantothenate from (R)-pantoate and beta-alanine: step 1/1. Catalyzes the condensation of pantoate with beta-alanine in an ATP-dependent reaction via a pantoyl-adenylate intermediate. The protein is Pantothenate synthetase of Burkholderia cenocepacia (strain HI2424).